We begin with the raw amino-acid sequence, 457 residues long: Proton extrusion protein PxcA (457 aa).

The next 4 helical transmembrane spans lie at 239–259, 332–352, 368–390, and 417–437; these read FILL…TFFL, INAI…GVVI, GILY…DMFV, and FNFL…KYWI.

The protein belongs to the CemA family.

It localises to the cell inner membrane. Functionally, required for H(+) efflux immediately after light irradiation to form a rapid H(+) concentration gradient across the thylakoid membranes. Together with PxcL, contributes to transient H(+) uptake following dark to light transition. This is Proton extrusion protein PxcA from Gloeothece citriformis (strain PCC 7424) (Cyanothece sp. (strain PCC 7424)).